We begin with the raw amino-acid sequence, 520 residues long: Probable kinase 098L (520 aa).

Positions 82-393 (LTSVQSFGSK…NSPLLKKGFV (312 aa)) constitute a Protein kinase domain. ATP contacts are provided by residues 88 to 96 (FGSKSKQGI) and lysine 111. Catalysis depends on aspartate 205, which acts as the Proton acceptor. The stretch at 416-442 (QTAQLIETDKEILDNLIDDLELKIVRK) forms a coiled coil.

The protein belongs to the protein kinase superfamily.

In terms of biological role, probable kinase. This chain is Probable kinase 098L, found in Aedes vexans (Inland floodwater mosquito).